A 614-amino-acid chain; its full sequence is Sulfite reductase [NADPH] flavoprotein alpha-component (614 aa).

A Flavodoxin-like domain is found at 79–217 (LTIIFASQTG…AATEWRKQVL (139 aa)). FMN contacts are provided by residues 85–90 (SQTGNA), 132–135 (STNG), and 168–177 (LGDSSYQFFC). The region spanning 249 to 463 (EQPYTASLST…VEHNNNFKLP (215 aa)) is the FAD-binding FR-type domain. Residues threonine 337, threonine 371, 401 to 404 (RLYS), 419 to 421 (TVG), tyrosine 425, and 434 to 437 (GGAS) contribute to the FAD site. NADP(+) is bound by residues 534-535 (SR), 540-544 (KVYVQ), and aspartate 576. FAD is bound at residue tyrosine 614.

The protein belongs to the NADPH-dependent sulphite reductase flavoprotein subunit CysJ family. This sequence in the N-terminal section; belongs to the flavodoxin family. In the C-terminal section; belongs to the flavoprotein pyridine nucleotide cytochrome reductase family. Alpha(8)-beta(8). The alpha component is a flavoprotein, the beta component is a hemoprotein. Requires FAD as cofactor. The cofactor is FMN.

It catalyses the reaction hydrogen sulfide + 3 NADP(+) + 3 H2O = sulfite + 3 NADPH + 4 H(+). Its pathway is sulfur metabolism; hydrogen sulfide biosynthesis; hydrogen sulfide from sulfite (NADPH route): step 1/1. In terms of biological role, component of the sulfite reductase complex that catalyzes the 6-electron reduction of sulfite to sulfide. This is one of several activities required for the biosynthesis of L-cysteine from sulfate. The flavoprotein component catalyzes the electron flow from NADPH -&gt; FAD -&gt; FMN to the hemoprotein component. In Vibrio cholerae serotype O1 (strain ATCC 39315 / El Tor Inaba N16961), this protein is Sulfite reductase [NADPH] flavoprotein alpha-component.